The sequence spans 671 residues: RNA polymerase sigma factor RpoD (671 aa).

Disordered regions lie at residues 1–45 and 229–260; these read MKKK…SKIK and DDDE…VSEK. Over residues 251–260 the composition is skewed to basic and acidic residues; it reads EERKKVVSEK. The tract at residues 436 to 506 is sigma-70 factor domain-2; the sequence is MAKSNLRLVV…SRAIADQART (71 aa). The Interaction with polymerase core subunit RpoC motif lies at 460 to 463; sequence DLIQ. The sigma-70 factor domain-3 stretch occupies residues 515 to 591; sequence DTINRINKVM…DKNIVSSIDH (77 aa). The sigma-70 factor domain-4 stretch occupies residues 604–658; the sequence is VLDQLNEREKAVIRMRFGLLDDESDRTLEEIGKELNVTRERVRQIESSAIKKLRS. A DNA-binding region (H-T-H motif) is located at residues 631-650; the sequence is LEEIGKELNVTRERVRQIES.

It belongs to the sigma-70 factor family. RpoD/SigA subfamily. In terms of assembly, interacts transiently with the RNA polymerase catalytic core.

It localises to the cytoplasm. Functionally, sigma factors are initiation factors that promote the attachment of RNA polymerase to specific initiation sites and are then released. This sigma factor is the primary sigma factor during exponential growth. The chain is RNA polymerase sigma factor RpoD from Helicobacter pylori (strain ATCC 700392 / 26695) (Campylobacter pylori).